Reading from the N-terminus, the 343-residue chain is Ribosomal RNA small subunit methyltransferase C (343 aa).

This sequence belongs to the methyltransferase superfamily. RsmC family. In terms of assembly, monomer.

Its subcellular location is the cytoplasm. It catalyses the reaction guanosine(1207) in 16S rRNA + S-adenosyl-L-methionine = N(2)-methylguanosine(1207) in 16S rRNA + S-adenosyl-L-homocysteine + H(+). Its function is as follows. Specifically methylates the guanine in position 1207 of 16S rRNA in the 30S particle. In Escherichia coli (strain SMS-3-5 / SECEC), this protein is Ribosomal RNA small subunit methyltransferase C.